Reading from the N-terminus, the 141-residue chain is Hemoglobin subunit alpha (141 aa).

A Globin domain is found at 1–141 (VLSPEDKNHV…VSTVLTSKYR (141 aa)). At S3 the chain carries Phosphoserine. N6-succinyllysine is present on K7. Position 16 is an N6-acetyllysine; alternate (K16). K16 is modified (N6-succinyllysine; alternate). At Y24 the chain carries Phosphotyrosine. Residue S35 is modified to Phosphoserine. The residue at position 40 (K40) is an N6-succinyllysine. S49 bears the Phosphoserine mark. H58 contacts O2. H87 contacts heme b. Phosphoserine is present on S102. A Phosphothreonine modification is found at T108. Phosphoserine occurs at positions 124 and 131. Phosphothreonine occurs at positions 134 and 137. At S138 the chain carries Phosphoserine.

Belongs to the globin family. In terms of assembly, heterotetramer of two alpha chains and two beta chains. Red blood cells.

In terms of biological role, involved in oxygen transport from the lung to the various peripheral tissues. Functionally, hemopressin acts as an antagonist peptide of the cannabinoid receptor CNR1. Hemopressin-binding efficiently blocks cannabinoid receptor CNR1 and subsequent signaling. This chain is Hemoglobin subunit alpha (HBA), found in Spalax ehrenbergi (Middle East blind mole rat).